The following is a 576-amino-acid chain: Nuclear protein localization protein 4 homolog (576 aa).

Disordered stretches follow at residues 67-96 and 200-219; these read LHLV…NNIS and QDDN…IKKS. Residues 72–94 are compositionally biased toward low complexity; sequence NNNNNNNDNKASSGSNNNNNNNN. Positions 208–218 are enriched in basic and acidic residues; it reads KDNKDNSEIKK. Residues 295-430 enclose the MPN domain; sequence GALVDFQSAN…MEAFQVSDQA (136 aa).

Belongs to the NPL4 family.

It participates in protein degradation; proteasomal ubiquitin-dependent pathway. In terms of biological role, may be part of a complex that binds ubiquitinated proteins and that is necessary for the export of misfolded proteins from the ER to the cytoplasm, where they are degraded by the proteasome. The chain is Nuclear protein localization protein 4 homolog (nploc4) from Dictyostelium discoideum (Social amoeba).